Here is a 198-residue protein sequence, read N- to C-terminus: V-type proton ATPase subunit E (198 aa).

Belongs to the V-ATPase E subunit family.

Produces ATP from ADP in the presence of a proton gradient across the membrane. The sequence is that of V-type proton ATPase subunit E from Borrelia recurrentis (strain A1).